The chain runs to 713 residues: Calpastatin (713 aa).

Residues 1-21 (MSRPGPKPAASSRPRRGAAAS) are compositionally biased toward low complexity. The tract at residues 1 to 152 (MSRPGPKPAA…SADGESVAGG (152 aa)) is disordered. Residues 47-64 (VTASSAATGTSPRMSTTG) show a composition bias toward polar residues. Phosphoserine is present on Ser57. Lys69 is covalently cross-linked (Glycyl lysine isopeptide (Lys-Gly) (interchain with G-Cter in SUMO2)). Lys86 is subject to N6-acetyllysine. A compositionally biased stretch (polar residues) spans 120–129 (SRSNEQIVSE). A phosphoserine mark is found at Ser122 and Ser171. Thr173 is modified (phosphothreonine). An Inhibitory domain 1 repeat occupies 208–260 (TNKDDPPYTGPVVLDPMDSTYLEALGIKEGTIPPEYRKLLEKNEAITGPLPDS). A disordered region spans residues 253-402 (ITGPLPDSPK…PEETSKCLSE (150 aa)). Phosphoserine is present on residues Ser260 and Ser281. Composition is skewed to polar residues over residues 275 to 285 (SDFTCSSPTGK), 294 to 304 (GESSKAQSAGV), and 326 to 346 (QALQALSDSLGTRQPDPQSHL). The Inhibitory domain 2 repeat unit spans residues 341-393 (DPQSHLRQAKQVKEAKAKEERQEKCGEDEDTVPAEYRLKPAKDKDGKPLLPEP). Composition is skewed to basic and acidic residues over residues 351-365 (QVKEAKAKEERQEKC) and 376-387 (YRLKPAKDKDGK). A phosphoserine mark is found at Ser401, Ser403, Ser410, and Ser445. The interval 442–507 (LARSLGTRKE…PLLPKEAEEQ (66 aa)) is disordered. Basic and acidic residues predominate over residues 448–505 (TRKEDPEDEKSLVDKVKEKAKEEDHEKLGEKEETIPPDYRLEIVKDKDGKPLLPKEAE). One copy of the Inhibitory domain 3 repeat lies at 451 to 504 (EDPEDEKSLVDKVKEKAKEEDHEKLGEKEETIPPDYRLEIVKDKDGKPLLPKEA). Residues Ser521 and Ser532 each carry the phosphoserine modification. Residues 544–558 (VSETVSQVPAPSNHT) show a composition bias toward polar residues. Positions 544–713 (VSETVSQVPA…PKPKVDEDAT (170 aa)) are disordered. Phosphoserine occurs at positions 580 and 582. The Inhibitory domain 4 repeat unit spans residues 588–641 (PDPDENKPLDDKVKEKIKAEHSEKLGERDDTIPPEYRHLLDNDGKDKPEKPLTK). Composition is skewed to basic and acidic residues over residues 588–648 (PDPD…KLGQ) and 687–713 (SKNEEKTKDSSKKTEEVPKPKVDEDAT).

The protein belongs to the protease inhibitor I27 (calpastatin) family.

Functionally, specific inhibition of calpain (calcium-dependent cysteine protease). Plays a key role in postmortem tenderization of meat and have been proposed to be involved in muscle protein degradation in living tissue. The chain is Calpastatin (Cast) from Rattus norvegicus (Rat).